The chain runs to 534 residues: CTP synthase (534 aa).

The tract at residues 1–266 is amidoligase domain; it reads MKQKFIFVTG…DELIVARLGL (266 aa). Serine 14 serves as a coordination point for CTP. Position 14 (serine 14) interacts with UTP. ATP-binding positions include 15–20 and aspartate 72; that span reads SIGKGL. 2 residues coordinate Mg(2+): aspartate 72 and glutamate 140. CTP is bound by residues 147–149, 187–192, and lysine 223; these read DIE and KSKPTQ. UTP-binding positions include 187–192 and lysine 223; that span reads KSKPTQ. One can recognise a Glutamine amidotransferase type-1 domain in the interval 291–534; that stretch reads KIGVVGKYVD…HFVKASLKKK (244 aa). Residue glycine 353 participates in L-glutamine binding. Cysteine 380 serves as the catalytic Nucleophile; for glutamine hydrolysis. L-glutamine contacts are provided by residues 381-384, glutamate 404, and arginine 464; that span reads FGMQ. Active-site residues include histidine 509 and glutamate 511.

This sequence belongs to the CTP synthase family. Homotetramer.

The enzyme catalyses UTP + L-glutamine + ATP + H2O = CTP + L-glutamate + ADP + phosphate + 2 H(+). The catalysed reaction is L-glutamine + H2O = L-glutamate + NH4(+). It catalyses the reaction UTP + NH4(+) + ATP = CTP + ADP + phosphate + 2 H(+). It functions in the pathway pyrimidine metabolism; CTP biosynthesis via de novo pathway; CTP from UDP: step 2/2. With respect to regulation, allosterically activated by GTP, when glutamine is the substrate; GTP has no effect on the reaction when ammonia is the substrate. The allosteric effector GTP functions by stabilizing the protein conformation that binds the tetrahedral intermediate(s) formed during glutamine hydrolysis. Inhibited by the product CTP, via allosteric rather than competitive inhibition. Catalyzes the ATP-dependent amination of UTP to CTP with either L-glutamine or ammonia as the source of nitrogen. Regulates intracellular CTP levels through interactions with the four ribonucleotide triphosphates. This is CTP synthase from Bdellovibrio bacteriovorus (strain ATCC 15356 / DSM 50701 / NCIMB 9529 / HD100).